Consider the following 297-residue polypeptide: HTH-type transcriptional regulator ArgP (297 aa).

The region spanning 4-60 (PDYRTLQALDAVIRERGFERAAQKLCITQSAVSQRIKQLENMFGQPLLVRTVPPRPT) is the HTH lysR-type domain. Residues 21 to 40 (FERAAQKLCITQSAVSQRIK) constitute a DNA-binding region (H-T-H motif).

The protein belongs to the LysR transcriptional regulatory family. Homodimer.

Controls the transcription of genes involved in arginine and lysine metabolism. The sequence is that of HTH-type transcriptional regulator ArgP from Klebsiella pneumoniae (strain 342).